A 462-amino-acid chain; its full sequence is L-seryl-tRNA(Sec) selenium transferase (462 aa).

At lysine 294 the chain carries N6-(pyridoxal phosphate)lysine.

This sequence belongs to the SelA family. As to quaternary structure, homodecamer; pentamer of dimers. Binds only one seryl-tRNA(Sec) per dimer. The cofactor is pyridoxal 5'-phosphate.

It is found in the cytoplasm. It carries out the reaction L-seryl-tRNA(Sec) + selenophosphate + H(+) = L-selenocysteinyl-tRNA(Sec) + phosphate. It participates in aminoacyl-tRNA biosynthesis; selenocysteinyl-tRNA(Sec) biosynthesis; selenocysteinyl-tRNA(Sec) from L-seryl-tRNA(Sec) (bacterial route): step 1/1. In terms of biological role, converts seryl-tRNA(Sec) to selenocysteinyl-tRNA(Sec) required for selenoprotein biosynthesis. The polypeptide is L-seryl-tRNA(Sec) selenium transferase (Yersinia pseudotuberculosis serotype O:1b (strain IP 31758)).